The chain runs to 850 residues: Rho guanine nucleotide exchange factor 33 (850 aa).

Basic and acidic residues-rich tracts occupy residues 1-13 (MEKSKAKQGENEH) and 98-113 (EEMQQKIEQLQQEKRR). 2 disordered regions span residues 1 to 21 (MEKSKAKQGENEHMPVNNPST) and 98 to 209 (EEMQ…DENL). Positions 54–128 (LEEKVKSCRC…KAKKAQKEEH (75 aa)) form a coiled coil. The span at 130–149 (AQAGPASAPAPGSAPTQGSP) shows a compositional bias: low complexity. Residues 164-175 (DFTNMLPSQNYE) show a composition bias toward polar residues. A DH domain is found at 273-448 (KRQTVALELL…RVFISHYTLL (176 aa)). Disordered stretches follow at residues 504-550 (EMLQ…WELE) and 702-850 (AAQA…WGWW). Composition is skewed to low complexity over residues 510–520 (PSSSSSAPAVS) and 754–770 (APHGPAAAAAASRGAPR). Arg766 carries the post-translational modification Omega-N-methylarginine. Polar residues predominate over residues 773–783 (FPQQRSQSEKQ). Positions 784–806 (TYLEEMHLEDATRFCPKEERESE) are enriched in basic and acidic residues. A compositionally biased stretch (basic residues) spans 826 to 835 (SFRKLFKKKN).

The sequence is that of Rho guanine nucleotide exchange factor 33 (Arhgef33) from Mus musculus (Mouse).